Here is a 254-residue protein sequence, read N- to C-terminus: Caffeoyl-CoA O-methyltransferase (254 aa).

The disordered stretch occupies residues 1–25 (MATTNVEENKQTQEQQPKEIKHQEV). Over residues 7 to 25 (EENKQTQEQQPKEIKHQEV) the composition is skewed to basic and acidic residues. Residue Lys28 participates in substrate binding. Residues Thr70, Glu92, 94 to 95 (GV), Ser100, Asp118, and Ala147 contribute to the S-adenosyl-L-methionine site. Asp170 lines the substrate pocket. Asp170 provides a ligand contact to a divalent metal cation. Residue Asp172 participates in S-adenosyl-L-methionine binding. Positions 196 and 197 each coordinate a divalent metal cation. Residue Asn201 participates in substrate binding.

This sequence belongs to the class I-like SAM-binding methyltransferase superfamily. Cation-dependent O-methyltransferase family. CCoAMT subfamily. A divalent metal cation is required as a cofactor.

The enzyme catalyses (E)-caffeoyl-CoA + S-adenosyl-L-methionine = (E)-feruloyl-CoA + S-adenosyl-L-homocysteine + H(+). It functions in the pathway aromatic compound metabolism; phenylpropanoid biosynthesis. Functionally, methylates caffeoyl-CoA to feruloyl-CoA and 5-hydroxyferuloyl-CoA to sinapoyl-CoA. Plays a role in the synthesis of feruloylated polysaccharides. Involved in the reinforcement of the plant cell wall. Also involved in the responding to wounding or pathogen challenge by the increased formation of cell wall-bound ferulic acid polymers. This chain is Caffeoyl-CoA O-methyltransferase, found in Mesembryanthemum crystallinum (Common ice plant).